The chain runs to 411 residues: Dual-specificity RNA methyltransferase RlmN (411 aa).

Residue E124 is the Proton acceptor of the active site. Positions 130–379 (EEGRGTLCIS…IRTPRGRDIL (250 aa)) constitute a Radical SAM core domain. The cysteines at positions 137 and 382 are disulfide-linked. [4Fe-4S] cluster-binding residues include C144, C148, and C151. S-adenosyl-L-methionine contacts are provided by residues 208-209 (GE), S240, 262-264 (SLH), and N339. The active-site S-methylcysteine intermediate is the C382.

This sequence belongs to the radical SAM superfamily. RlmN family. [4Fe-4S] cluster serves as cofactor.

The protein resides in the cytoplasm. The catalysed reaction is adenosine(2503) in 23S rRNA + 2 reduced [2Fe-2S]-[ferredoxin] + 2 S-adenosyl-L-methionine = 2-methyladenosine(2503) in 23S rRNA + 5'-deoxyadenosine + L-methionine + 2 oxidized [2Fe-2S]-[ferredoxin] + S-adenosyl-L-homocysteine. It catalyses the reaction adenosine(37) in tRNA + 2 reduced [2Fe-2S]-[ferredoxin] + 2 S-adenosyl-L-methionine = 2-methyladenosine(37) in tRNA + 5'-deoxyadenosine + L-methionine + 2 oxidized [2Fe-2S]-[ferredoxin] + S-adenosyl-L-homocysteine. Its function is as follows. Specifically methylates position 2 of adenine 2503 in 23S rRNA and position 2 of adenine 37 in tRNAs. m2A2503 modification seems to play a crucial role in the proofreading step occurring at the peptidyl transferase center and thus would serve to optimize ribosomal fidelity. The protein is Dual-specificity RNA methyltransferase RlmN of Rhizobium meliloti (strain 1021) (Ensifer meliloti).